A 1041-amino-acid chain; its full sequence is Histone deacetylase complex subunit SAP130-B (1041 aa).

Disordered regions lie at residues 1 to 62 (MSSQ…QEPV), 111 to 131 (KSTM…SAVP), 572 to 592 (TNQG…EPKS), 614 to 769 (TPAG…PSGA), and 806 to 852 (VLAN…DEER). The span at 18 to 30 (VSNSGASVGQNVQ) shows a compositional bias: polar residues. Over residues 33–42 (EVAREIDVQS) the composition is skewed to basic and acidic residues. Residues 576–592 (VQTSSVSSQQASSEPKS) are compositionally biased toward low complexity. Polar residues predominate over residues 614 to 641 (TPAGTTVMQSHSQSPGIGSSPAQGSSPR). A compositionally biased stretch (low complexity) spans 707-728 (PGAADQPSAAASLPSSHHPTAA).

The protein belongs to the SAP130 family.

The protein resides in the nucleus. In terms of biological role, acts as a transcriptional repressor. This chain is Histone deacetylase complex subunit SAP130-B (sap130-b), found in Xenopus laevis (African clawed frog).